A 545-amino-acid chain; its full sequence is MTTRYIFVTGGVVSSLGKGIAAASLAAILEARGLNVTIMKLDPYINLDPGTMSPTQHGEVFVTEDGAETDLDLGHYERFIRTKMNRRNNFTTGRIYEEVLRKERRGDYLGATIQVIPHITNAIKEKVLEGGEGHDVAIVEIGGTVGDIESLPFLESIRQLGVELGRDRTLFMHLTLVPFLGAAGEVKTKPTQHSVKELRSIGIAPDVLVCRGDRAIPSNEKAKISLFCNVEERAVISLKDVDSIYKIPALLKAQGLDDLVTKRFGLECREADLSEWENVIYQEANPTGEVTIGMVGKYTELPDAYKSVNEALKHAGLFNRVSVNIKYIDSQNIEAKGTEVLEGLDGILVPGGFGERGVEGKIMAAQYARENNLPYFGICLGMQVALIEFARHVAGLENAHSTEFNKDTPHPVVGLITEWIDEKGNIEQRHEESDLGGTMRLGAQLCHLIEGTKAAEAYKGLTCVERHRHRYEVNNTYRERLEKAGLVFSGLSTDRQLVEMIELPNHPWFVAGQFHPEFTSTPRDGQPLFQGFVAAAVAYQKRDLG.

The segment at 1-266 is amidoligase domain; the sequence is MTTRYIFVTG…DDLVTKRFGL (266 aa). CTP is bound at residue Ser-14. Ser-14 is a UTP binding site. Residues 15–20 and Asp-72 contribute to the ATP site; that span reads SLGKGI. Asp-72 and Glu-140 together coordinate Mg(2+). CTP-binding positions include 147–149, 187–192, and Lys-223; these read DIE and KTKPTQ. Residues 187–192 and Lys-223 each bind UTP; that span reads KTKPTQ. 239 to 241 is a binding site for ATP; that stretch reads KDV. The Glutamine amidotransferase type-1 domain maps to 291-542; that stretch reads TIGMVGKYTE…VAAAVAYQKR (252 aa). Residue Gly-352 coordinates L-glutamine. Catalysis depends on Cys-379, which acts as the Nucleophile; for glutamine hydrolysis. Residues 380 to 383, Glu-403, and Arg-470 contribute to the L-glutamine site; that span reads LGMQ. Catalysis depends on residues His-515 and Glu-517.

It belongs to the CTP synthase family. As to quaternary structure, homotetramer.

The enzyme catalyses UTP + L-glutamine + ATP + H2O = CTP + L-glutamate + ADP + phosphate + 2 H(+). The catalysed reaction is L-glutamine + H2O = L-glutamate + NH4(+). It catalyses the reaction UTP + NH4(+) + ATP = CTP + ADP + phosphate + 2 H(+). The protein operates within pyrimidine metabolism; CTP biosynthesis via de novo pathway; CTP from UDP: step 2/2. Its activity is regulated as follows. Allosterically activated by GTP, when glutamine is the substrate; GTP has no effect on the reaction when ammonia is the substrate. The allosteric effector GTP functions by stabilizing the protein conformation that binds the tetrahedral intermediate(s) formed during glutamine hydrolysis. Inhibited by the product CTP, via allosteric rather than competitive inhibition. Functionally, catalyzes the ATP-dependent amination of UTP to CTP with either L-glutamine or ammonia as the source of nitrogen. Regulates intracellular CTP levels through interactions with the four ribonucleotide triphosphates. The polypeptide is CTP synthase (Shewanella loihica (strain ATCC BAA-1088 / PV-4)).